The sequence spans 464 residues: Argininosuccinate lyase (464 aa).

The protein belongs to the lyase 1 family. Argininosuccinate lyase subfamily.

It localises to the cytoplasm. It catalyses the reaction 2-(N(omega)-L-arginino)succinate = fumarate + L-arginine. It participates in amino-acid biosynthesis; L-arginine biosynthesis; L-arginine from L-ornithine and carbamoyl phosphate: step 3/3. This is Argininosuccinate lyase from Pseudomonas entomophila (strain L48).